The chain runs to 538 residues: Sensor protein CitS (538 aa).

Topologically, residues 1–13 are cytoplasmic; sequence MKRRLFPLTFSAK. Residues 14 to 34 form a helical membrane-spanning segment; that stretch reads MMGFIALLIIAMFVLLGVFLN. The Extracellular portion of the chain corresponds to 35-174; sequence EQYARTLEEQ…DIQQVIGERL (140 aa). A helical transmembrane segment spans residues 175–195; that stretch reads IAMWQIVVVIMILGLMGTWLV. The Cytoplasmic segment spans residues 196–538; the sequence is ANTVKKATLG…TIPKHEAKEG (343 aa). The PAS domain maps to 216 to 282; the sequence is QQKEAILQSI…PEVLQVGKGQ (67 aa). A Histidine kinase domain is found at 339-534; that stretch reads AQTHEFSNKL…CFVLTIPKHE (196 aa). Position 342 is a phosphohistidine; by autocatalysis (H342).

It is found in the cell membrane. It carries out the reaction ATP + protein L-histidine = ADP + protein N-phospho-L-histidine.. In terms of biological role, member of the two-component regulatory system CitT/CitS. Functions probably as a membrane-associated protein kinase that phosphorylates CitT in response to environmental citrate or Mg(2+)-citrate complex. The chain is Sensor protein CitS (citS) from Halalkalibacterium halodurans (strain ATCC BAA-125 / DSM 18197 / FERM 7344 / JCM 9153 / C-125) (Bacillus halodurans).